The chain runs to 270 residues: Methylthioribulose-1-phosphate dehydratase (270 aa).

Cys122 contacts substrate. Zn(2+)-binding residues include His140 and His142. The active-site Proton donor/acceptor is the Glu165. Position 230 (His230) interacts with Zn(2+).

Belongs to the aldolase class II family. MtnB subfamily. Requires Zn(2+) as cofactor.

The protein resides in the cytoplasm. It catalyses the reaction 5-(methylsulfanyl)-D-ribulose 1-phosphate = 5-methylsulfanyl-2,3-dioxopentyl phosphate + H2O. It participates in amino-acid biosynthesis; L-methionine biosynthesis via salvage pathway; L-methionine from S-methyl-5-thio-alpha-D-ribose 1-phosphate: step 2/6. Catalyzes the dehydration of methylthioribulose-1-phosphate (MTRu-1-P) into 2,3-diketo-5-methylthiopentyl-1-phosphate (DK-MTP-1-P). This chain is Methylthioribulose-1-phosphate dehydratase, found in Candida albicans (strain SC5314 / ATCC MYA-2876) (Yeast).